Here is a 104-residue protein sequence, read N- to C-terminus: Large ribosomal subunit protein bL21 (104 aa).

A compositionally biased stretch (basic residues) spans 81-90 (QGYRRHHGHR). Positions 81-104 (QGYRRHHGHRQPYTQVKITGISAG) are disordered.

This sequence belongs to the bacterial ribosomal protein bL21 family. In terms of assembly, part of the 50S ribosomal subunit. Contacts protein L20.

Its function is as follows. This protein binds to 23S rRNA in the presence of protein L20. In Halorhodospira halophila (strain DSM 244 / SL1) (Ectothiorhodospira halophila (strain DSM 244 / SL1)), this protein is Large ribosomal subunit protein bL21.